The sequence spans 1004 residues: ABC transporter G family member 25 (1004 aa).

A signal peptide spans 1–27 (MAASQLLAAAVAAAVFLAALLVPPARC). The chain crosses the membrane as a helical span at residues 271-291 (ATALFGGILIVILSVVLLLVY). The segment at 343–373 (SDQLAASSNEARHATEGNGKRSKNRKKLAHA) is disordered. Basic and acidic residues predominate over residues 352–361 (EARHATEGNG). Basic residues predominate over residues 362-372 (KRSKNRKKLAH). Residues 419–659 (VVFKGLTLSI…FSSLGIKVPE (241 aa)) form the ABC transporter domain. 451–458 (GPSGAGKT) serves as a coordination point for ATP. 6 consecutive transmembrane segments (helical) span residues 776–796 (ATLQ…IGTI), 804–824 (FGVA…QLAA), 886–906 (LVFL…AIWF), 907–927 (ELGL…LVGT), 943–963 (WALE…WLIT), and 978–998 (FVLC…IALL).

Belongs to the ABC transporter superfamily. ABCG family. Eye pigment precursor importer (TC 3.A.1.204) subfamily.

The protein localises to the membrane. The polypeptide is ABC transporter G family member 25 (Oryza sativa subsp. japonica (Rice)).